A 211-amino-acid polypeptide reads, in one-letter code: Large ribosomal subunit protein mL48 (211 aa).

A mitochondrion-targeting transit peptide spans 1-27; sequence MSGTLGKVLGVWTNTVSKQGFSLLRFR. K198 is subject to N6-succinyllysine.

The protein belongs to the mitochondrion-specific ribosomal protein mL48 family. In terms of assembly, component of the mitochondrial ribosome large subunit (39S) which comprises a 16S rRNA and about 50 distinct proteins. Interacts with OXA1L.

Its subcellular location is the mitochondrion. This is Large ribosomal subunit protein mL48 (Mrpl48) from Mus musculus (Mouse).